Consider the following 428-residue polypeptide: MLQPQIKLNAKNEIYVPGDKSISHRTVLFCALSQGKSEIHGFLEGEDPLHTLRCFESMGLSVSSLGKGSYSVVSPGKQNLNSPKGVLDFGNAGTGIRLSAGLLAGLPGMNATLTGDASLCKRPMARIMNPLQEMGASVISVEGNDRAPLRIEGKQLKDYSYVSPIASAQIKSALVLAALASDISIEYKESEVSRDHTENMIRFLGGTITHHSSVHFTVKPPYHFEGTKYVIPGDISSAAFFIVFGLCVGGSEPLLIKNIGLNPSRIGILTVLQNMGGKIEIIAKRVECGEEIGDLLVYPSKLKRTVITEDLIPSIIDEIPILTIAGLFSEGGFQISHAEELRAKESDRIRSMVSNLERLGVKVKEVNDGYEFDEVGTIQNAKIETFMDHRIAMSFAILSKLSGVSLSFDDTSWVDTSFPGFFEILKSV.

3-phosphoshikimate-binding residues include lysine 20, serine 21, and arginine 25. Phosphoenolpyruvate is bound at residue lysine 20. 2 residues coordinate phosphoenolpyruvate: glycine 93 and arginine 122. 4 residues coordinate 3-phosphoshikimate: serine 167, glutamine 169, aspartate 317, and lysine 344. Residue glutamine 169 coordinates phosphoenolpyruvate. Aspartate 317 functions as the Proton acceptor in the catalytic mechanism. The phosphoenolpyruvate site is built by arginine 348 and arginine 390.

It belongs to the EPSP synthase family. In terms of assembly, monomer.

The protein resides in the cytoplasm. It carries out the reaction 3-phosphoshikimate + phosphoenolpyruvate = 5-O-(1-carboxyvinyl)-3-phosphoshikimate + phosphate. It functions in the pathway metabolic intermediate biosynthesis; chorismate biosynthesis; chorismate from D-erythrose 4-phosphate and phosphoenolpyruvate: step 6/7. In terms of biological role, catalyzes the transfer of the enolpyruvyl moiety of phosphoenolpyruvate (PEP) to the 5-hydroxyl of shikimate-3-phosphate (S3P) to produce enolpyruvyl shikimate-3-phosphate and inorganic phosphate. The polypeptide is 3-phosphoshikimate 1-carboxyvinyltransferase (Leptospira biflexa serovar Patoc (strain Patoc 1 / ATCC 23582 / Paris)).